Reading from the N-terminus, the 316-residue chain is 4-hydroxyphenylacetate decarboxylase activating enzyme (316 aa).

One can recognise a Radical SAM core domain in the interval 20–307 (HDGPGCRTTV…QDIFLDNGIA (288 aa)). [4Fe-4S] cluster is bound by residues Cys34, Cys38, Cys41, Cys60, Cys66, Cys69, and Cys105. Position 40-42 (40-42 (WCA)) interacts with S-adenosyl-L-methionine. A 4Fe-4S ferredoxin-type domain is found at 84–115 (NKPVIDWNICKDCESFECVNSCYYNAFKLCAK). S-adenosyl-L-methionine contacts are provided by residues Gly144, 193–195 (DIK), and His267.

This sequence belongs to the organic radical-activating enzymes family. Monomer. [4Fe-4S] cluster serves as cofactor.

It catalyses the reaction glycyl-[protein] + reduced [flavodoxin] + S-adenosyl-L-methionine = glycin-2-yl radical-[protein] + semiquinone [flavodoxin] + 5'-deoxyadenosine + L-methionine + H(+). In terms of biological role, catalyzes activation of 4-hydroxyphenylacetate decarboxylase under anaerobic conditions by generation of an organic free radical on a glycine residue, via a homolytic cleavage of S-adenosyl-L-methionine (SAM). This is 4-hydroxyphenylacetate decarboxylase activating enzyme from Clostridioides difficile (strain 630) (Peptoclostridium difficile).